The chain runs to 261 residues: Triosephosphate isomerase (261 aa).

10-12 (NWK) lines the substrate pocket. Catalysis depends on His100, which acts as the Electrophile. The Proton acceptor role is filled by Glu172. Substrate contacts are provided by residues Gly178, Ser218, and 239–240 (GG).

It belongs to the triosephosphate isomerase family. As to quaternary structure, homodimer.

It is found in the cytoplasm. It catalyses the reaction D-glyceraldehyde 3-phosphate = dihydroxyacetone phosphate. Its pathway is carbohydrate biosynthesis; gluconeogenesis. It functions in the pathway carbohydrate degradation; glycolysis; D-glyceraldehyde 3-phosphate from glycerone phosphate: step 1/1. In terms of biological role, involved in the gluconeogenesis. Catalyzes stereospecifically the conversion of dihydroxyacetone phosphate (DHAP) to D-glyceraldehyde-3-phosphate (G3P). This Mycobacterium marinum (strain ATCC BAA-535 / M) protein is Triosephosphate isomerase.